Consider the following 349-residue polypeptide: Bifunctional nitrilase/nitrile hydratase NIT4A (349 aa).

A CN hydrolase domain is found at 29-301 (VRATVVQAST…EALISADLDL (273 aa)). E69 acts as the Proton acceptor in catalysis. K156 acts as the Proton donor in catalysis. The active-site Nucleophile is C190.

The protein belongs to the carbon-nitrogen hydrolase superfamily. Nitrilase family. Expressed in roots, stems, cotyledons, leaves and flowers.

It localises to the cell membrane. The catalysed reaction is a nitrile + 2 H2O = a carboxylate + NH4(+). It carries out the reaction 3-cyano-L-alanine + 2 H2O = L-aspartate + NH4(+). It catalyses the reaction L-asparagine = 3-cyano-L-alanine + H2O. Its function is as follows. Highly specific for beta-cyano-L-alanine (Ala(CN)). Low activity with 3-phenylpropionitrile (PPN). Not associated with auxin production but may be involved in cyanide detoxification. The sequence is that of Bifunctional nitrilase/nitrile hydratase NIT4A (NIT4A) from Nicotiana tabacum (Common tobacco).